Here is a 288-residue protein sequence, read N- to C-terminus: Homoserine kinase (288 aa).

Residue 79–89 (PPARGLGSSSA) participates in ATP binding.

Belongs to the GHMP kinase family. Homoserine kinase subfamily.

It is found in the cytoplasm. The catalysed reaction is L-homoserine + ATP = O-phospho-L-homoserine + ADP + H(+). It participates in amino-acid biosynthesis; L-threonine biosynthesis; L-threonine from L-aspartate: step 4/5. Catalyzes the ATP-dependent phosphorylation of L-homoserine to L-homoserine phosphate. This is Homoserine kinase from Listeria welshimeri serovar 6b (strain ATCC 35897 / DSM 20650 / CCUG 15529 / CIP 8149 / NCTC 11857 / SLCC 5334 / V8).